The chain runs to 134 residues: Small ribosomal subunit protein uS9 (134 aa).

Positions 109-134 (DARRTEPHKPSKSSKGPRARRQKSYR) are disordered. Residues 118-134 (PSKSSKGPRARRQKSYR) show a composition bias toward basic residues.

Belongs to the universal ribosomal protein uS9 family.

The polypeptide is Small ribosomal subunit protein uS9 (Methanococcus vannielii (strain ATCC 35089 / DSM 1224 / JCM 13029 / OCM 148 / SB)).